The sequence spans 163 residues: Aspartate 1-decarboxylase (163 aa).

The active-site Schiff-base intermediate with substrate; via pyruvic acid is Ser25. At Ser25 the chain carries Pyruvic acid (Ser). Residue Thr57 coordinates substrate. The active-site Proton donor is Tyr58. Residue 73–75 (GAA) coordinates substrate.

It belongs to the PanD family. Heterooctamer of four alpha and four beta subunits. Pyruvate serves as cofactor. Post-translationally, is synthesized initially as an inactive proenzyme, which is activated by self-cleavage at a specific serine bond to produce a beta-subunit with a hydroxyl group at its C-terminus and an alpha-subunit with a pyruvoyl group at its N-terminus.

It localises to the cytoplasm. The enzyme catalyses L-aspartate + H(+) = beta-alanine + CO2. It participates in cofactor biosynthesis; (R)-pantothenate biosynthesis; beta-alanine from L-aspartate: step 1/1. Functionally, catalyzes the pyruvoyl-dependent decarboxylation of aspartate to produce beta-alanine. This chain is Aspartate 1-decarboxylase, found in Saccharopolyspora erythraea (strain ATCC 11635 / DSM 40517 / JCM 4748 / NBRC 13426 / NCIMB 8594 / NRRL 2338).